The sequence spans 861 residues: Leucine--tRNA ligase (861 aa).

Positions 42–52 (PYPSGKLHMGH) match the 'HIGH' region motif. The short motif at 620-624 (KMSKS) is the 'KMSKS' region element. Position 623 (Lys-623) interacts with ATP.

Belongs to the class-I aminoacyl-tRNA synthetase family.

The protein resides in the cytoplasm. The catalysed reaction is tRNA(Leu) + L-leucine + ATP = L-leucyl-tRNA(Leu) + AMP + diphosphate. This is Leucine--tRNA ligase from Marinobacter nauticus (strain ATCC 700491 / DSM 11845 / VT8) (Marinobacter aquaeolei).